The primary structure comprises 419 residues: Tyrosine--tRNA ligase (419 aa).

Tyr-34 contributes to the L-tyrosine binding site. The 'HIGH' region signature appears at Pro-39 to His-48. Residues Tyr-169 and Gln-173 each coordinate L-tyrosine. The short motif at Lys-229–Ser-233 is the 'KMSKS' region element. Lys-232 provides a ligand contact to ATP. The S4 RNA-binding domain maps to Leu-352 to Lys-419.

Belongs to the class-I aminoacyl-tRNA synthetase family. TyrS type 1 subfamily. Homodimer.

It localises to the cytoplasm. The catalysed reaction is tRNA(Tyr) + L-tyrosine + ATP = L-tyrosyl-tRNA(Tyr) + AMP + diphosphate + H(+). Catalyzes the attachment of tyrosine to tRNA(Tyr) in a two-step reaction: tyrosine is first activated by ATP to form Tyr-AMP and then transferred to the acceptor end of tRNA(Tyr). This chain is Tyrosine--tRNA ligase, found in Streptococcus agalactiae serotype Ia (strain ATCC 27591 / A909 / CDC SS700).